The primary structure comprises 231 residues: Endo-1,4-beta-xylanase A (231 aa).

Positions 1–19 (MVSFKSLLVAVSALTGALA) are cleaved as a signal peptide. Residue Asn-32 is glycosylated (N-linked (GlcNAc...) asparagine). The GH11 domain occupies 41 to 229 (QVTGNSEGYH…SSGSSSIYVQ (189 aa)). Glu-125 functions as the Nucleophile in the catalytic mechanism. Catalysis depends on Glu-216, which acts as the Proton donor.

It belongs to the glycosyl hydrolase 11 (cellulase G) family.

It is found in the secreted. It catalyses the reaction Endohydrolysis of (1-&gt;4)-beta-D-xylosidic linkages in xylans.. It participates in glycan degradation; xylan degradation. Its activity is regulated as follows. Inhibited by the proteinaceous endoxylanase inhibitor I from T.aestivum (TAXI-I). Functionally, endo-1,4-beta-xylanase involved in the hydrolysis of xylan, a major structural heterogeneous polysaccharide found in plant biomass representing the second most abundant polysaccharide in the biosphere, after cellulose. Plays an important role in causing fusarium head blight (FHB) on cereal crops. This chain is Endo-1,4-beta-xylanase A (XYLA), found in Gibberella zeae (strain ATCC MYA-4620 / CBS 123657 / FGSC 9075 / NRRL 31084 / PH-1) (Wheat head blight fungus).